Reading from the N-terminus, the 222-residue chain is PKHD-type hydroxylase Syncc9902_2001 (222 aa).

In terms of domain architecture, Fe2OG dioxygenase spans 80–174; sequence RVHSILISRS…RLVCVGWIES (95 aa). Fe cation-binding residues include H98, D100, and H155. R165 is a 2-oxoglutarate binding site.

Fe(2+) is required as a cofactor. L-ascorbate serves as cofactor.

This Synechococcus sp. (strain CC9902) protein is PKHD-type hydroxylase Syncc9902_2001.